The sequence spans 195 residues: Shikimate kinase (195 aa).

30 to 35 contacts ATP; sequence GAGKTA. Thr34 serves as a coordination point for Mg(2+). Asp52, Arg76, and Gly98 together coordinate substrate. Arg136 serves as a coordination point for ATP. Position 155 (Arg155) interacts with substrate.

The protein belongs to the shikimate kinase family. In terms of assembly, monomer. Requires Mg(2+) as cofactor.

The protein localises to the cytoplasm. It catalyses the reaction shikimate + ATP = 3-phosphoshikimate + ADP + H(+). The protein operates within metabolic intermediate biosynthesis; chorismate biosynthesis; chorismate from D-erythrose 4-phosphate and phosphoenolpyruvate: step 5/7. Catalyzes the specific phosphorylation of the 3-hydroxyl group of shikimic acid using ATP as a cosubstrate. This chain is Shikimate kinase, found in Ruegeria pomeroyi (strain ATCC 700808 / DSM 15171 / DSS-3) (Silicibacter pomeroyi).